The following is a 273-amino-acid chain: Nickel permease LarQ (273 aa).

5 helical membrane-spanning segments follow: residues 64–84 (LIQL…ILLW), 117–137 (MLFV…FFGL), 159–179 (LAGL…AIAI), 210–230 (LIGA…LELY), and 251–271 (HWRD…FIFW).

The protein belongs to the CbiQ family. In terms of assembly, may form an energy-coupling factor (ECF) transporter complex composed of an ATP-binding protein (A component, LarO), a transmembrane protein (T component, LarQ) and a fused possible substrate-capture protein (S component, LarMN) of unknown stoichiometry.

It localises to the cell membrane. Probable transmembrane component of the energy-coupling factor (ECF) transporter complex LarMNQO involved in nickel import. This chain is Nickel permease LarQ, found in Lactiplantibacillus plantarum (strain ATCC BAA-793 / NCIMB 8826 / WCFS1) (Lactobacillus plantarum).